Reading from the N-terminus, the 350-residue chain is Hydroxymethylglutaryl-CoA synthase (350 aa).

The Proton donor/acceptor role is filled by Glu83. Cys115 serves as the catalytic Acyl-thioester intermediate. Positions 115 and 156 each coordinate (3S)-3-hydroxy-3-methylglutaryl-CoA. Position 204 (Arg204) interacts with CoA. Thr206 and His239 together coordinate (3S)-3-hydroxy-3-methylglutaryl-CoA. Residue His239 is the Proton donor/acceptor of the active site. Lys244 lines the CoA pocket. The (3S)-3-hydroxy-3-methylglutaryl-CoA site is built by Asn271 and Ser301.

The protein belongs to the thiolase-like superfamily. Archaeal HMG-CoA synthase family. As to quaternary structure, interacts with acetoacetyl-CoA thiolase that catalyzes the precedent step in the pathway and with a DUF35 protein. The acetoacetyl-CoA thiolase/HMG-CoA synthase complex channels the intermediate via a fused CoA-binding site, which allows for efficient coupling of the endergonic thiolase reaction with the exergonic HMGCS reaction.

The enzyme catalyses acetoacetyl-CoA + acetyl-CoA + H2O = (3S)-3-hydroxy-3-methylglutaryl-CoA + CoA + H(+). It participates in metabolic intermediate biosynthesis; (R)-mevalonate biosynthesis; (R)-mevalonate from acetyl-CoA: step 2/3. Functionally, catalyzes the condensation of acetyl-CoA with acetoacetyl-CoA to form 3-hydroxy-3-methylglutaryl-CoA (HMG-CoA). Functions in the mevalonate (MVA) pathway leading to isopentenyl diphosphate (IPP), a key precursor for the biosynthesis of isoprenoid compounds that are building blocks of archaeal membrane lipids. This Pyrococcus furiosus (strain ATCC 43587 / DSM 3638 / JCM 8422 / Vc1) protein is Hydroxymethylglutaryl-CoA synthase.